We begin with the raw amino-acid sequence, 394 residues long: Elongation factor Tu 2 (394 aa).

Residues 10–204 (KPHVNVGTIG…ALDSYIPQPE (195 aa)) enclose the tr-type G domain. Residues 19–26 (GHVDHGKT) form a G1 region. 19 to 26 (GHVDHGKT) provides a ligand contact to GTP. Mg(2+) is bound at residue Thr-26. Residues 60–64 (GITIN) are G2. The G3 stretch occupies residues 81 to 84 (DCPG). Residues 81–85 (DCPGH) and 136–139 (NKCD) each bind GTP. A G4 region spans residues 136–139 (NKCD). The segment at 174-176 (SAL) is G5.

Belongs to the TRAFAC class translation factor GTPase superfamily. Classic translation factor GTPase family. EF-Tu/EF-1A subfamily. As to quaternary structure, monomer.

Its subcellular location is the cytoplasm. The catalysed reaction is GTP + H2O = GDP + phosphate + H(+). Its function is as follows. GTP hydrolase that promotes the GTP-dependent binding of aminoacyl-tRNA to the A-site of ribosomes during protein biosynthesis. The sequence is that of Elongation factor Tu 2 from Yersinia pestis bv. Antiqua (strain Antiqua).